The primary structure comprises 731 residues: Actin filament-associated protein 1 (731 aa).

M1 is modified (N-acetylmethionine). The interval 46–90 (VKDHAQKAETNNLPAPPQMPLPEIPQPWLPPDSGPPPLPTSSLPE) is disordered. A compositionally biased stretch (pro residues) spans 59–84 (PAPPQMPLPEIPQPWLPPDSGPPPLP). The short motif at 70–73 (PQPW) is the SH3-binding element. The SH2-binding 1 signature appears at 93–96 (YEEA). The tract at residues 118–138 (GSSYESYDEEEEDGKGKKTQH) is disordered. The PH 1 domain maps to 152–248 (DAKICAFLLR…WLKVIKEAYS (97 aa)). The tract at residues 252 to 318 (GPVDPECSPP…SKSEAKGTVS (67 aa)) is disordered. Residues 271–284 (AELEKKLSSERPSS) show a composition bias toward basic and acidic residues. Phosphoserine occurs at positions 283 and 284. A PH 2 domain is found at 348–442 (DVPTCGYLNV…WIGILLAETG (95 aa)). An SH2-binding 2 motif is present at residues 452–457 (YDYIDV). The tract at residues 511–550 (SLKNKKPPASSNGLPVKGRAPSSQQKKVESAGGVKRTASN) is disordered. S549 is subject to Phosphoserine. A coiled-coil region spans residues 558-649 (KNRVEADAKR…VKESLKKALA (92 aa)). Positions 595–638 (DLRAAIEVNAGRKTQVALEDKLKRLEEECKQREAERVSLELELT) are interaction with F-actin. The segment at 657–731 (AIEPKSGTSS…AREWELKNGT (75 aa)) is disordered. 3 positions are modified to phosphoserine: S665, S666, and S669. T676 carries the post-translational modification Phosphothreonine. A compositionally biased stretch (polar residues) spans 678 to 687 (ENSPISSCDT). Residues S680 and S688 each carry the phosphoserine modification. Residues 721–731 (KAREWELKNGT) show a composition bias toward basic and acidic residues.

As to quaternary structure, monomer and homomultimer. Interacts via its C-terminus with F-actin; probably involving AFAP1 multimers. Interacts with activated SRC SH3-SH2 domains. Interacts via its PH 1 domain with PRKCA, PRKCB and PRKCI. Phosphorylated on tyrosine residues. As to expression, widely expressed with highest levels in brain.

The protein resides in the cytoplasm. The protein localises to the cytoskeleton. Its subcellular location is the stress fiber. Its function is as follows. Can cross-link actin filaments into both network and bundle structures. May modulate changes in actin filament integrity and induce lamellipodia formation. May function as an adapter molecule that links other proteins, such as SRC and PKC to the actin cytoskeleton. The chain is Actin filament-associated protein 1 (Afap1) from Rattus norvegicus (Rat).